Consider the following 212-residue polypeptide: Protein irg-1 (212 aa).

As to expression, expressed in the intestine.

Functionally, plays a role in innate immunity by conferring resistance to virulent strains of the Gram-negative bacterium P.aeruginosa via the zip-2 pathway. Can act independently of several immunity-related pathways including pmk-1 p38MAPK, dbl-1 TGF-beta, kgb-1 JNK and bar-1/beta-catenin pathways. In Caenorhabditis elegans, this protein is Protein irg-1.